The chain runs to 1118 residues: DNA mismatch repair protein MSH1, mitochondrial (1118 aa).

Position 768–775 (Gly768–Ser775) interacts with ATP.

It belongs to the DNA mismatch repair MutS family.

The protein resides in the mitochondrion. It is found in the plastid. The protein localises to the chloroplast. Its function is as follows. DNA mismatch repair protein specifically involved in maintenance of mitochondrial genome configuration by controlling specific rearranged portion. Functions by suppressing asymmetric recombination at some repeat pairs. This Arabidopsis thaliana (Mouse-ear cress) protein is DNA mismatch repair protein MSH1, mitochondrial (MSH1).